The chain runs to 1040 residues: Activated CDC42 kinase 1 (1040 aa).

The tract at residues 1-110 (MQPEEGTGWL…PSPTPGGLAG (110 aa)) is SAM-like domain. The segment at 86–109 (EAEFPSHHSQSTFRKPSPTPGGLA) is disordered. The residue at position 113 (Thr-113) is a Phosphothreonine. Residues 126–385 (LRLLEKLGDG…PTFVALRDFL (260 aa)) form the Protein kinase domain. Residues 132–140 (LGDGSFGVV) and Lys-158 contribute to the ATP site. The active-site Proton acceptor is Asp-252. Residue Tyr-284 is modified to Phosphotyrosine; by SRC and autocatalysis. Residues 388–448 (AQPTDMRALQ…PRNVVTSVAG (61 aa)) form the SH3 domain. The tract at residues 505–527 (RPTQHLGRMKKPTYDPVSEDPDP) is disordered. A Phosphotyrosine modification is found at Tyr-518. The required for interaction with SRC stretch occupies residues 623-652 (DWDARPLPPPPAYDDVAQDEDDFEVCSINS). The interval 632–635 (PPAY) is required for interaction with NEDD4. Positions 722–824 (TGQLTPSPTP…MPTTQSFASD (103 aa)) are disordered. The tract at residues 733–876 (GDDKPQVPPR…PYLERYQRFL (144 aa)) is EBD domain. 2 stretches are compositionally biased toward pro residues: residues 738–749 (QVPPRVPIPPRP) and 772–783 (PSSPPRVPPREP). Residues 802–812 (PLPHRLSSSPG) show a composition bias toward low complexity. Tyr-827 carries the post-translational modification Phosphotyrosine. Arg-839 carries the omega-N-methylarginine modification. A phosphotyrosine mark is found at Tyr-859 and Tyr-872. Phosphoserine is present on Ser-881. Residues 881 to 957 (SPEEPAALPV…CPGDGQEAAR (77 aa)) are disordered. Over residues 888–903 (LPVPPLLPPPSTPAPA) the composition is skewed to pro residues. Residues 922-931 (NFSTNNSNPG) show a composition bias toward polar residues. Residues 958–998 (PADKVQMLQAMVHGVTTEECQAALRSHSWSIQRAAQYLKVE) form the UBA domain.

Belongs to the protein kinase superfamily. Tyr protein kinase family. In terms of assembly, homodimer. Interacts with CDC42. Interacts with CSPG4 (activated). Interacts with MERTK (activated); stimulates autophosphorylation. May interact (phosphorylated) with HSP90AB1; maintains kinase activity. Interacts with NPHP1. Interacts with SNX9 (via SH3 domain). Interacts with SRC (via SH2 and SH3 domain). Interacts with EGFR, and this interaction is dependent on EGF stimulation and kinase activity of EGFR. Interacts (via kinase domain) with AKT1. Part of a collagen stimulated complex involved in cell migration composed of CDC42, CRK, TNK2 and BCAR1/p130cas. Interacts with BCAR1/p130cas via SH3 domains. Forms complexes with GRB2 and numerous receptor tyrosine kinases (RTK) including LTK, AXL or PDGFRL, in which GRB2 promotes RTK recruitment by TNK2. Interacts with NEDD4 (via WW3 domain). NEDD4L and EGF promote association with NEDD4. Requires Mg(2+) as cofactor. Post-translationally, autophosphorylation regulates kinase activity. Phosphorylation on Tyr-518 is required for interaction with SRC and is observed during association with clathrin-coated pits. Polyubiquitinated by NEDD4 and NEDD4L. Degradation can be induced by EGF and is lysosome-dependent.

It localises to the cell membrane. Its subcellular location is the nucleus. It is found in the endosome. The protein resides in the cell junction. The protein localises to the adherens junction. It localises to the cytoplasmic vesicle membrane. Its subcellular location is the cytoplasmic vesicle. It is found in the clathrin-coated vesicle. The protein resides in the membrane. The protein localises to the clathrin-coated pit. It localises to the cytoplasm. Its subcellular location is the cytosol. The enzyme catalyses L-tyrosyl-[protein] + ATP = O-phospho-L-tyrosyl-[protein] + ADP + H(+). It carries out the reaction L-seryl-[protein] + ATP = O-phospho-L-seryl-[protein] + ADP + H(+). It catalyses the reaction L-threonyl-[protein] + ATP = O-phospho-L-threonyl-[protein] + ADP + H(+). Its function is as follows. Non-receptor tyrosine-protein and serine/threonine-protein kinase that is implicated in cell spreading and migration, cell survival, cell growth and proliferation. Transduces extracellular signals to cytosolic and nuclear effectors. Phosphorylates AKT1, AR, MCF2, WASL and WWOX. Implicated in trafficking and clathrin-mediated endocytosis through binding to epidermal growth factor receptor (EGFR) and clathrin. Binds to both poly- and mono-ubiquitin and regulates ligand-induced degradation of EGFR, thereby contributing to the accumulation of EGFR at the limiting membrane of early endosomes. Downstream effector of CDC42 which mediates CDC42-dependent cell migration via phosphorylation of BCAR1. May be involved both in adult synaptic function and plasticity and in brain development. Activates AKT1 by phosphorylating it on 'Tyr-176'. Phosphorylates AR on 'Tyr-267' and 'Tyr-363', thereby promoting its recruitment to androgen-responsive enhancers (AREs). Phosphorylates WWOX on 'Tyr-287'. Phosphorylates MCF2, thereby enhancing its activity as a guanine nucleotide exchange factor (GEF) toward Rho family proteins. Contributes to the control of AXL receptor levels. Confers metastatic properties on cancer cells and promotes tumor growth by negatively regulating tumor suppressor such as WWOX and positively regulating pro-survival factors such as AKT1 and AR. This chain is Activated CDC42 kinase 1, found in Rattus norvegicus (Rat).